The following is a 415-amino-acid chain: Gamma-glutamyl phosphate reductase (415 aa).

This sequence belongs to the gamma-glutamyl phosphate reductase family.

The protein localises to the cytoplasm. It catalyses the reaction L-glutamate 5-semialdehyde + phosphate + NADP(+) = L-glutamyl 5-phosphate + NADPH + H(+). The protein operates within amino-acid biosynthesis; L-proline biosynthesis; L-glutamate 5-semialdehyde from L-glutamate: step 2/2. In terms of biological role, catalyzes the NADPH-dependent reduction of L-glutamate 5-phosphate into L-glutamate 5-semialdehyde and phosphate. The product spontaneously undergoes cyclization to form 1-pyrroline-5-carboxylate. This chain is Gamma-glutamyl phosphate reductase, found in Bacillus cereus (strain ATCC 10987 / NRS 248).